The chain runs to 492 residues: Myocyte-specific enhancer factor 2A (492 aa).

Residues 3–57 (RKKIQITRIMDERNRQVTFTKRKFGLMKKAYELSVLCDCEIALIIFNSSNKLFQY) enclose the MADS-box domain. The mef2-type DNA-binding region spans 58-86 (ASTDMDKVLLKYTEYNEPHESRTNSDIVE). Ser59 carries the phosphoserine; by CK2 modification. A Phosphoserine modification is found at Ser98. Residues 183–227 (PQATLHRNVSPGAPQRPPSTGSAGGMLSTSDLTVPNGAGSSPVGN) form a disordered region. Polar residues predominate over residues 209–227 (LSTSDLTVPNGAGSSPVGN). The residue at position 235 (Ser235) is a Phosphoserine. Residues 242-270 (TGANSLGKVMPTKSPPPPGGGSLGMNSRK) are disordered. At Lys249 the chain carries N6-acetyllysine. The residue at position 255 (Ser255) is a Phosphoserine. The required for interaction with MAPKs stretch occupies residues 266 to 283 (MNSRKPDLRVVIPPSSKG). Phosphothreonine; by MAPK7 and MAPK14 is present on residues Thr304 and Thr311. Ser347 carries the post-translational modification Phosphoserine; by MAPK7. Residues 382–394 (SNLSINTNQNINI) show a composition bias toward polar residues. The segment at 382-492 (SNLSINTNQN…KRMRMDAWVT (111 aa)) is disordered. Position 395 is an N6-acetyllysine; alternate (Lys395). Residue Lys395 forms a Glycyl lysine isopeptide (Lys-Gly) (interchain with G-Cter in SUMO); alternate linkage. Residue Ser400 is modified to Phosphoserine; by CDK5. Thr407 carries the phosphothreonine modification. A compositionally biased stretch (pro residues) spans 417–430 (PQPPPPPPQAPQPQ). Phosphoserine; by MAPK is present on Ser438. Residues 438-451 (SPVDSLSSSSSSYD) show a composition bias toward low complexity. 2 stretches are compositionally biased toward basic and acidic residues: residues 452-462 (GSDREDPRGDF) and 473-492 (NSEDRESPSVKRMRMDAWVT).

As to quaternary structure, binds DNA as a homo- or heterodimer. Dimerizes with MEF2D. Interacts with HDAC7. Interacts with PIAS1; the interaction enhances sumoylation. Interacts with HDAC4, HDAC9 and SLC2A4RG. Interacts (via the N-terminal) with MAPK7; the interaction results in the phosphorylation and transcriptional activity of MEF2A. Post-translationally, constitutive phosphorylation on Ser-400 promotes Lys-395 sumoylation thus preventing acetylation at this site. Dephosphorylation on Ser-400 by PPP3CA upon neuron depolarization promotes a switch from sumoylation to acetylation on residue Lys-395 leading to inhibition of dendrite claw differentiation. Phosphorylation on Thr-304 and Thr-311 are the main sites involved in p38 MAPK signaling and activate transcription. Phosphorylated on these sites by MAPK14/p38alpha and MAPK11/p38beta, but not by MAPK13/p38delta nor by MAPK12/p38gamma. Phosphorylation on Ser-400 by CDK5 induced by neurotoxicity inhibits MEF2A transcriptional activation leading to apoptosis of cortical neurons. Phosphorylation on Thr-304, Thr-311 and Ser-347 can be induced by EGF. Sumoylation on Lys-395 is enhanced by PIAS1 and represses transcriptional activity. Phosphorylation on Ser-400 is required for sumoylation. Has no effect on nuclear location nor on DNA binding. Sumoylated with SUMO1 and, to a lesser extent with SUMO2 and SUMO3. PIASx facilitates sumoylation in postsynaptic dendrites in the cerebellar cortex and promotes their morphogenesis. In terms of processing, acetylation on Lys-395 activates transcriptional activity. Acetylated by p300 on several sites in diffentiating myocytes. Acetylation on Lys-4 increases DNA binding and transactivation. Hyperacetylation by p300 leads to enhanced cardiac myocyte growth and heart failure. Post-translationally, proteolytically cleaved in cerebellar granule neurons on several sites by caspase 3 and caspase 7 following neurotoxicity. Preferentially cleaves the CDK5-mediated hyperphosphorylated form which leads to neuron apoptosis and transcriptional inactivation.

The protein resides in the nucleus. Functionally, transcriptional activator which binds specifically to the MEF2 element, 5'-YTA[AT](4)TAR-3', found in numerous muscle-specific genes. Also involved in the activation of numerous growth factor- and stress-induced genes. Mediates cellular functions not only in skeletal and cardiac muscle development, but also in neuronal differentiation and survival. Plays diverse roles in the control of cell growth, survival and apoptosis via p38 MAPK signaling in muscle-specific and/or growth factor-related transcription. In cerebellar granule neurons, phosphorylated and sumoylated MEF2A represses transcription of NUR77 promoting synaptic differentiation. Associates with chromatin to the ZNF16 promoter. This chain is Myocyte-specific enhancer factor 2A (MEF2A), found in Bos taurus (Bovine).